The primary structure comprises 248 residues: Probable transcriptional regulatory protein Mnod_7401 (248 aa).

This sequence belongs to the TACO1 family.

The protein localises to the cytoplasm. The protein is Probable transcriptional regulatory protein Mnod_7401 of Methylobacterium nodulans (strain LMG 21967 / CNCM I-2342 / ORS 2060).